The primary structure comprises 80 residues: Large ribosomal subunit protein bL31 (80 aa).

The Zn(2+) site is built by C16, C18, C38, and C41.

This sequence belongs to the bacterial ribosomal protein bL31 family. Type A subfamily. Part of the 50S ribosomal subunit. Requires Zn(2+) as cofactor.

In terms of biological role, binds the 23S rRNA. This chain is Large ribosomal subunit protein bL31, found in Mycobacterium bovis (strain ATCC BAA-935 / AF2122/97).